A 32-amino-acid chain; its full sequence is MTAISDSQVYVALVSALITSFLAVRLGLALYD.

A helical membrane pass occupies residues 9 to 31; sequence VYVALVSALITSFLAVRLGLALY.

This sequence belongs to the PsaM family.

The protein resides in the plastid. It localises to the chloroplast thylakoid membrane. In Chaetosphaeridium globosum (Charophycean green alga), this protein is Photosystem I reaction center subunit XII.